The primary structure comprises 767 residues: Ribonucleoside-diphosphate reductase large subunit (767 aa).

Residues Thr-176, 191–192, Gly-222, 392–396, and 578–582 contribute to the substrate site; these read SC, NLCAE, and PTAGT. A disulfide bridge connects residues Cys-192 and Cys-408. The Proton acceptor role is filled by Asn-392. The Cysteine radical intermediate role is filled by Cys-394. Catalysis depends on Glu-396, which acts as the Proton acceptor.

It belongs to the ribonucleoside diphosphate reductase large chain family. In terms of assembly, heterotetramer composed of a homodimer of the large subunit (R1) and a homodimer of the small subunit (R2). Larger multisubunit protein complex are also active, composed of (R1)n(R2)n.

It catalyses the reaction a 2'-deoxyribonucleoside 5'-diphosphate + [thioredoxin]-disulfide + H2O = a ribonucleoside 5'-diphosphate + [thioredoxin]-dithiol. Functionally, ribonucleoside-diphosphate reductase holoenzyme provides the precursors necessary for viral DNA synthesis. Allows virus growth in non-dividing cells, as well as reactivation from latency in infected hosts. Catalyzes the biosynthesis of deoxyribonucleotides from the corresponding ribonucleotides. The chain is Ribonucleoside-diphosphate reductase large subunit from Saimiri sciureus (Common squirrel monkey).